A 608-amino-acid polypeptide reads, in one-letter code: Glutamine--fructose-6-phosphate aminotransferase [isomerizing] (608 aa).

Cys2 serves as the catalytic Nucleophile; for GATase activity. Residues 2 to 217 (CGIVGILGRG…DGDWAVLTRA (216 aa)) enclose the Glutamine amidotransferase type-2 domain. 2 consecutive SIS domains span residues 284–423 (LPFD…ERGK) and 456–598 (LARY…VDQP). Lys603 (for Fru-6P isomerization activity) is an active-site residue.

It is found in the cytoplasm. It carries out the reaction D-fructose 6-phosphate + L-glutamine = D-glucosamine 6-phosphate + L-glutamate. In terms of biological role, involved in the production of the root hair deformation (HAD) factor specifically on soybean. The chain is Glutamine--fructose-6-phosphate aminotransferase [isomerizing] (nodM) from Bradyrhizobium diazoefficiens (strain JCM 10833 / BCRC 13528 / IAM 13628 / NBRC 14792 / USDA 110).